The primary structure comprises 205 residues: GTP-binding protein yptV5 (205 aa).

Residue 15–22 (GDSGVGKT) participates in GTP binding. The Effector region motif lies at 37–45 (YKATIGADF). Residues 63–67 (DTAGQ) and 125–128 (NKID) contribute to the GTP site. 2 S-geranylgeranyl cysteine lipidation sites follow: cysteine 204 and cysteine 205.

The protein belongs to the small GTPase superfamily. Rab family.

It is found in the cell membrane. Functionally, protein transport. Probably involved in vesicular traffic. The sequence is that of GTP-binding protein yptV5 (YPTV5) from Volvox carteri (Green alga).